The primary structure comprises 391 residues: Formate-dependent phosphoribosylglycinamide formyltransferase (391 aa).

Residues Glu20–Leu21 and Glu80 contribute to the N(1)-(5-phospho-beta-D-ribosyl)glycinamide site. Residues Arg112, Lys153, Ser158–Gln163, Glu193–Ile196, and Glu201 contribute to the ATP site. The ATP-grasp domain occupies Arg117–Leu306. Mg(2+) is bound by residues Glu265 and Glu277. N(1)-(5-phospho-beta-D-ribosyl)glycinamide-binding positions include Asp284, Lys354, and Arg361 to Arg362.

This sequence belongs to the PurK/PurT family. Homodimer.

The enzyme catalyses N(1)-(5-phospho-beta-D-ribosyl)glycinamide + formate + ATP = N(2)-formyl-N(1)-(5-phospho-beta-D-ribosyl)glycinamide + ADP + phosphate + H(+). It participates in purine metabolism; IMP biosynthesis via de novo pathway; N(2)-formyl-N(1)-(5-phospho-D-ribosyl)glycinamide from N(1)-(5-phospho-D-ribosyl)glycinamide (formate route): step 1/1. Its function is as follows. Involved in the de novo purine biosynthesis. Catalyzes the transfer of formate to 5-phospho-ribosyl-glycinamide (GAR), producing 5-phospho-ribosyl-N-formylglycinamide (FGAR). Formate is provided by PurU via hydrolysis of 10-formyl-tetrahydrofolate. The chain is Formate-dependent phosphoribosylglycinamide formyltransferase from Photobacterium profundum (strain SS9).